Here is a 1345-residue protein sequence, read N- to C-terminus: Aldehyde oxidase 2 (1345 aa).

A 2Fe-2S ferredoxin-type domain is found at 9–96 (DELEFFVNGK…GAAVTTVEGV (88 aa)). Cysteine 48, cysteine 53, cysteine 56, and cysteine 78 together coordinate [2Fe-2S] cluster. Glutamine 117 contacts Mo-molybdopterin. Positions 118, 121, 153, and 155 each coordinate [2Fe-2S] cluster. A Mo-molybdopterin-binding site is contributed by cysteine 155. Residues 238 to 423 (FYGERITWIA…GSVYIPHSQK (186 aa)) form the FAD-binding PCMH-type domain. Residues 266–273 (LISGNTAL), alanine 347, serine 356, histidine 360, aspartate 369, and leucine 413 contribute to the FAD site. Residues 812–813 (GF), 1094–1097 (ASVG), glutamine 1209, and leucine 1274 contribute to the Mo-molybdopterin site. The active-site Proton acceptor; for azaheterocycle hydroxylase activity is the glutamate 1276.

The protein belongs to the xanthine dehydrogenase family. As to quaternary structure, homodimer. It depends on [2Fe-2S] cluster as a cofactor. Requires FAD as cofactor. Mo-molybdopterin is required as a cofactor.

The protein localises to the cytoplasm. It carries out the reaction an aldehyde + O2 + H2O = a carboxylate + H2O2 + H(+). Functionally, oxidase with broad substrate specificity, oxidizing aromatic azaheterocycles, such as phthalazine, as well as aldehydes, such as benzaldehyde and retinal. This Rattus norvegicus (Rat) protein is Aldehyde oxidase 2 (Aox2).